Here is a 353-residue protein sequence, read N- to C-terminus: MSYNVTIEPTGEVIEVEDGQTILQAALRQGVWLPFACGHGTCATCKVQVVEGEVDIGEASPFALMDIERDERKVLACCAIPLSDLVIEADVDADPDFLGHPVEDYRGVVSALVDLSPTIKGLHIKLDRPMPFQAGQYVNLALPGIDGTRAFSLANPPSRNDEVELHVRLVEGGAATGFIHKQLKVGDAVELSGPYGQFFVRDSQAGDLIFIAGGSGLSSPQSMILDLLERGDTRRITLFQGARNRAELYNCELFEELAARHPNFSYVPALNQANDDPEWQGFKGFVHDAAKAHFDGRFGGQKAYLCGPPPMIDAAITTLMQGRLFERDIFMERFYTAADGAGESSRSALFKRI.

A 2Fe-2S ferredoxin-type domain is found at 3–93; that stretch reads YNVTIEPTGE…DLVIEADVDA (91 aa). Residues cysteine 37, cysteine 42, cysteine 45, and cysteine 77 each coordinate [2Fe-2S] cluster. One can recognise an FAD-binding FR-type domain in the interval 102–201; it reads VEDYRGVVSA…SGPYGQFFVR (100 aa).

The multicomponent enzyme phenol hydroxylase is formed by DmpL (P1 component), DmpM (P2 component), DmpN (P3 component), DmpO (P4 component) and DmpP (P5 component). FAD serves as cofactor. The cofactor is [2Fe-2S] cluster.

It carries out the reaction phenol + NADH + O2 + H(+) = catechol + NAD(+) + H2O. It participates in aromatic compound metabolism; phenol degradation. Part of a multicomponent enzyme which catalyzes the degradation of phenol and some of its methylated derivatives. DmpP probably transfers electrons from NADH, via FAD and the iron-sulfur center, to the oxygenase component of the complex. Required for growth on phenol and for in vitro phenol hydroxylase activity. The chain is Phenol 2-monooxygenase, reductase component DmpP from Pseudomonas sp. (strain CF600).